The chain runs to 253 residues: uncharacterized protein (253 aa).

This is an uncharacterized protein from Escherichia coli O6:H1 (strain CFT073 / ATCC 700928 / UPEC).